We begin with the raw amino-acid sequence, 421 residues long: UDP-N-acetylglucosamine 1-carboxyvinyltransferase 1 (421 aa).

22–23 is a phosphoenolpyruvate binding site; the sequence is KN. Residue R95 coordinates UDP-N-acetyl-alpha-D-glucosamine. The Proton donor role is filled by C119. C119 carries the 2-(S-cysteinyl)pyruvic acid O-phosphothioketal modification. UDP-N-acetyl-alpha-D-glucosamine contacts are provided by residues 124 to 128, D308, and V330; that span reads RPIEQ.

This sequence belongs to the EPSP synthase family. MurA subfamily.

Its subcellular location is the cytoplasm. It catalyses the reaction phosphoenolpyruvate + UDP-N-acetyl-alpha-D-glucosamine = UDP-N-acetyl-3-O-(1-carboxyvinyl)-alpha-D-glucosamine + phosphate. Its pathway is cell wall biogenesis; peptidoglycan biosynthesis. Its function is as follows. Cell wall formation. Adds enolpyruvyl to UDP-N-acetylglucosamine. This is UDP-N-acetylglucosamine 1-carboxyvinyltransferase 1 from Staphylococcus epidermidis (strain ATCC 35984 / DSM 28319 / BCRC 17069 / CCUG 31568 / BM 3577 / RP62A).